We begin with the raw amino-acid sequence, 126 residues long: MPEPAKSAPAPKKGSKKAVTKAQKKDGKKRKRSCKESYSIYVYKVLKQVHPDTGISSKAMGIMNSFVNDIFERIAGEASRLAHYNKRSTITSREIQTAVRLLLPGELAKHAVSEGTKAVTKYTSSK.

The span at 1-12 (MPEPAKSAPAPK) shows a compositional bias: low complexity. The tract at residues 1-32 (MPEPAKSAPAPKKGSKKAVTKAQKKDGKKRKR) is disordered. At Pro2 the chain carries N-acetylproline. Glu3 is subject to ADP-ribosyl glutamic acid. Residue Lys6 is modified to N6-(2-hydroxyisobutyryl)lysine; alternate. Residue Lys6 is modified to N6-(beta-hydroxybutyryl)lysine; alternate. Lys6 carries the N6-acetyllysine; alternate modification. Lys6 carries the N6-butyryllysine; alternate modification. At Lys6 the chain carries N6-crotonyllysine; alternate. Lys6 is subject to N6-lactoyllysine; alternate. Residue Lys6 forms a Glycyl lysine isopeptide (Lys-Gly) (interchain with G-Cter in SUMO2); alternate linkage. Position 7 is an ADP-ribosylserine (Ser7). Lys12 carries the N6-(beta-hydroxybutyryl)lysine; alternate modification. 2 positions are modified to N6-acetyllysine; alternate: Lys12 and Lys13. Lys12 and Lys13 each carry N6-crotonyllysine; alternate. Lys12 carries the N6-lactoyllysine; alternate modification. Lys13 carries the post-translational modification N6-(2-hydroxyisobutyryl)lysine; alternate. Ser15 is modified (phosphoserine; by STK4/MST1). An N6-acetyllysine; alternate mark is found at Lys16, Lys17, Lys21, and Lys24. 4 positions are modified to N6-crotonyllysine; alternate: Lys16, Lys17, Lys21, and Lys24. Lys16, Lys17, Lys21, and Lys24 each carry N6-lactoyllysine; alternate. An N6-glutaryllysine; alternate modification is found at Lys17. Lys21 and Lys24 each carry N6-(2-hydroxyisobutyryl)lysine; alternate. N6-(beta-hydroxybutyryl)lysine; alternate is present on Lys21. Lys21 is modified (N6-butyryllysine; alternate). A Glycyl lysine isopeptide (Lys-Gly) (interchain with G-Cter in SUMO2); alternate cross-link involves residue Lys21. An N6-(2-hydroxyisobutyryl)lysine modification is found at Lys25. Lys35 carries the post-translational modification N6-(2-hydroxyisobutyryl)lysine; alternate. Lys35 is modified (N6-(beta-hydroxybutyryl)lysine; alternate). Lys35 carries the post-translational modification N6-crotonyllysine; alternate. Lys35 bears the N6-glutaryllysine; alternate mark. Position 35 is an N6-succinyllysine; alternate (Lys35). Lys35 is covalently cross-linked (Glycyl lysine isopeptide (Lys-Gly) (interchain with G-Cter in ubiquitin); alternate). The residue at position 36 (Glu36) is a PolyADP-ribosyl glutamic acid. The residue at position 37 (Ser37) is a Phosphoserine; by AMPK. Residues Lys44, Lys47, and Lys58 each carry the N6-(2-hydroxyisobutyryl)lysine; alternate modification. An N6-lactoyllysine; alternate modification is found at Lys44. N6-glutaryllysine; alternate occurs at positions 44 and 47. Position 47 is an N6-methyllysine; alternate (Lys47). At Lys58 the chain carries N6,N6-dimethyllysine; alternate. Arg80 bears the Dimethylated arginine mark. Lys86 is modified (N6-(2-hydroxyisobutyryl)lysine; alternate). Lys86 carries the post-translational modification N6-acetyllysine; alternate. Lys86 is subject to N6-lactoyllysine; alternate. N6,N6,N6-trimethyllysine; alternate is present on Lys86. An omega-N-methylarginine mark is found at Arg87 and Arg93. The residue at position 109 (Lys109) is an N6-(2-hydroxyisobutyryl)lysine; alternate. At Lys109 the chain carries N6-lactoyllysine; alternate. Lys109 carries the N6-glutaryllysine; alternate modification. An N6-methyllysine; alternate modification is found at Lys109. Ser113 is a glycosylation site (O-linked (GlcNAc) serine). Thr116 carries the post-translational modification Phosphothreonine. Lys117 and Lys121 each carry N6-(2-hydroxyisobutyryl)lysine; alternate. Residue Lys117 is modified to N6-(beta-hydroxybutyryl)lysine; alternate. N6-lactoyllysine; alternate occurs at positions 117 and 121. 2 positions are modified to N6-glutaryllysine; alternate: Lys117 and Lys121. Residues Lys117 and Lys121 each carry the N6-succinyllysine; alternate modification. Lys117 carries the post-translational modification N6-methylated lysine; alternate. Lys121 is covalently cross-linked (Glycyl lysine isopeptide (Lys-Gly) (interchain with G-Cter in ubiquitin); alternate).

The protein belongs to the histone H2B family. The nucleosome is a histone octamer containing two molecules each of H2A, H2B, H3 and H4 assembled in one H3-H4 heterotetramer and two H2A-H2B heterodimers. The octamer wraps approximately 147 bp of DNA. In terms of processing, monoubiquitination at Lys-35 (H2BK34Ub) by the MSL1/MSL2 dimer is required for histone H3 'Lys-4' (H3K4me) and 'Lys-79' (H3K79me) methylation and transcription activation at specific gene loci, such as HOXA9 and MEIS1 loci. Similarly, monoubiquitination at Lys-121 (H2BK120Ub) by the RNF20/40 complex gives a specific tag for epigenetic transcriptional activation and is also prerequisite for histone H3 'Lys-4' and 'Lys-79' methylation. It also functions cooperatively with the FACT dimer to stimulate elongation by RNA polymerase II. H2BK120Ub also acts as a regulator of mRNA splicing: deubiquitination by USP49 is required for efficient cotranscriptional splicing of a large set of exons. Phosphorylated on Ser-15 (H2BS14ph) by STK4/MST1 during apoptosis; which facilitates apoptotic chromatin condensation. Also phosphorylated on Ser-15 in response to DNA double strand breaks (DSBs), and in correlation with somatic hypermutation and immunoglobulin class-switch recombination. Phosphorylation at Ser-37 (H2BS36ph) by AMPK in response to stress promotes transcription. Post-translationally, ADP-ribosylated by PARP1 or PARP2 on Ser-7 (H2BS6ADPr) in response to DNA damage. H2BS6ADPr promotes recruitment of CHD1L. Mono-ADP-ribosylated on Glu-3 (H2BE2ADPr) by PARP3 in response to single-strand breaks. Poly ADP-ribosylation on Glu-36 (H2BE35ADPr) by PARP1 regulates adipogenesis: it inhibits phosphorylation at Ser-37 (H2BS36ph), thereby blocking expression of pro-adipogenetic genes. In terms of processing, crotonylation (Kcr) is specifically present in male germ cells and marks testis-specific genes in post-meiotic cells, including X-linked genes that escape sex chromosome inactivation in haploid cells. Crotonylation marks active promoters and enhancers and confers resistance to transcriptional repressors. It is also associated with post-meiotically activated genes on autosomes. GlcNAcylation at Ser-113 promotes monoubiquitination of Lys-121. It fluctuates in response to extracellular glucose, and associates with transcribed genes. Post-translationally, lactylated in macrophages by EP300/P300 by using lactoyl-CoA directly derived from endogenous or exogenous lactate, leading to stimulates gene transcription.

It is found in the nucleus. Its subcellular location is the chromosome. In terms of biological role, core component of nucleosome. Nucleosomes wrap and compact DNA into chromatin, limiting DNA accessibility to the cellular machineries which require DNA as a template. Histones thereby play a central role in transcription regulation, DNA repair, DNA replication and chromosomal stability. DNA accessibility is regulated via a complex set of post-translational modifications of histones, also called histone code, and nucleosome remodeling. Functionally, has broad antibacterial activity. May contribute to the formation of the functional antimicrobial barrier of the colonic epithelium, and to the bactericidal activity of amniotic fluid. In Pongo abelii (Sumatran orangutan), this protein is Histone H2B type 2-E.